Reading from the N-terminus, the 464-residue chain is Glutamate--tRNA ligase (464 aa).

The short motif at 12–22 (PSPTGYLHIGG) is the 'HIGH' region element. The short motif at 254–258 (KLSKR) is the 'KMSKS' region element. K257 lines the ATP pocket.

This sequence belongs to the class-I aminoacyl-tRNA synthetase family. Glutamate--tRNA ligase type 1 subfamily. Monomer.

It is found in the cytoplasm. It carries out the reaction tRNA(Glu) + L-glutamate + ATP = L-glutamyl-tRNA(Glu) + AMP + diphosphate. Its function is as follows. Catalyzes the attachment of glutamate to tRNA(Glu) in a two-step reaction: glutamate is first activated by ATP to form Glu-AMP and then transferred to the acceptor end of tRNA(Glu). The protein is Glutamate--tRNA ligase of Mycoplasma mobile (strain ATCC 43663 / 163K / NCTC 11711) (Mesomycoplasma mobile).